The chain runs to 80 residues: Clavanin-E (80 aa).

A signal peptide spans 1–19 (MKTTILILLILGLGINAKS). Positions 20-29 (LEERKSEEEK) are excised as a propeptide. Phenylalanine amide is present on Phe52. The propeptide occupies 54–80 (DDQQDNGKFYGYYAEDNGKHWYDTGDQ).

It is found in the secreted. Has antimicrobial activity. This is Clavanin-E from Styela clava (Sea squirt).